Reading from the N-terminus, the 248-residue chain is Protein-lysine N-methyltransferase EFM5 (248 aa).

It belongs to the class I-like SAM-binding methyltransferase superfamily. EFM5 family.

The protein resides in the cytoplasm. Its function is as follows. S-adenosyl-L-methionine-dependent protein-lysine N-methyltransferase that trimethylates elongation factor 1-alpha (TEF1 and TEF2) at 'Lys-79'. Required for replication of Brome mosaic virus (BMV). This chain is Protein-lysine N-methyltransferase EFM5, found in Saccharomyces cerevisiae (strain ATCC 204508 / S288c) (Baker's yeast).